The chain runs to 323 residues: MRTATLYRYSVPMEAGVILRHQRLKSRDGLLVKLQQGELSGWGEIAPLPEFSQETLDQAQVAAECWLQHWVSGVESDDSVLPSVAFGLSCAQAELKQTLPLSADYRKAPLCTGDPDELFAVLQALPGEKVAKVKVGLYEAVRDGMIVNVLLEALPDLTLRLDANRSWSRAKADGFAKYVNPALRSRIAFLEEPCKTRAESREFAQDTGIAIAWDESVREADFQVEAEPGVAAIVIKPTLVGSLARCQQLVQQAHQAGLVAVISSSIESSLGLTQLARLAAWLTPVTVPGLDTLDLMQAQVVRPWPDSPLPLITTEQLGVVWHR.

Catalysis depends on K134, which acts as the Proton donor. D162, E191, and D214 together coordinate Mg(2+). Catalysis depends on K236, which acts as the Proton acceptor.

Belongs to the mandelate racemase/muconate lactonizing enzyme family. MenC type 1 subfamily. Requires a divalent metal cation as cofactor.

It carries out the reaction (1R,6R)-6-hydroxy-2-succinyl-cyclohexa-2,4-diene-1-carboxylate = 2-succinylbenzoate + H2O. Its pathway is quinol/quinone metabolism; 1,4-dihydroxy-2-naphthoate biosynthesis; 1,4-dihydroxy-2-naphthoate from chorismate: step 4/7. It functions in the pathway quinol/quinone metabolism; menaquinone biosynthesis. Functionally, converts 2-succinyl-6-hydroxy-2,4-cyclohexadiene-1-carboxylate (SHCHC) to 2-succinylbenzoate (OSB). The protein is o-succinylbenzoate synthase of Yersinia pestis bv. Antiqua (strain Antiqua).